The sequence spans 228 residues: L-ribulose-5-phosphate 4-epimerase UlaF (228 aa).

Substrate-binding positions include 26–27 (GN), 43–44 (SG), and 72–73 (SS). Residues Asp-74, His-93, and His-95 each contribute to the Zn(2+) site. Catalysis depends on Asp-118, which acts as the Proton donor/acceptor. Residue His-167 participates in Zn(2+) binding. Tyr-225 (proton donor/acceptor) is an active-site residue.

Belongs to the aldolase class II family. AraD/FucA subfamily. Zn(2+) serves as cofactor.

It carries out the reaction L-ribulose 5-phosphate = D-xylulose 5-phosphate. It functions in the pathway cofactor degradation; L-ascorbate degradation; D-xylulose 5-phosphate from L-ascorbate: step 4/4. Functionally, catalyzes the isomerization of L-ribulose 5-phosphate to D-xylulose 5-phosphate. Is involved in the anaerobic L-ascorbate utilization. The sequence is that of L-ribulose-5-phosphate 4-epimerase UlaF from Escherichia coli (strain ATCC 8739 / DSM 1576 / NBRC 3972 / NCIMB 8545 / WDCM 00012 / Crooks).